The chain runs to 582 residues: Threonine--tRNA ligase (582 aa).

The tract at residues 185–478 (DHRKLGKELD…LVEHYGGAFP (294 aa)) is catalytic. Zn(2+) contacts are provided by Cys278, His329, and His455.

The protein belongs to the class-II aminoacyl-tRNA synthetase family. Homodimer. Zn(2+) is required as a cofactor.

Its subcellular location is the cytoplasm. It carries out the reaction tRNA(Thr) + L-threonine + ATP = L-threonyl-tRNA(Thr) + AMP + diphosphate + H(+). In terms of biological role, catalyzes the attachment of threonine to tRNA(Thr) in a two-step reaction: L-threonine is first activated by ATP to form Thr-AMP and then transferred to the acceptor end of tRNA(Thr). Also edits incorrectly charged L-seryl-tRNA(Thr). In Borrelia garinii subsp. bavariensis (strain ATCC BAA-2496 / DSM 23469 / PBi) (Borreliella bavariensis), this protein is Threonine--tRNA ligase.